Here is a 539-residue protein sequence, read N- to C-terminus: Protein mushroom body miniature (539 aa).

A compositionally biased stretch (polar residues) spans 1 to 11 (MHNSGGQSGWN). The tract at residues 1-345 (MHNSGGQSGW…EDDKKARKQK (345 aa)) is disordered. Over residues 67 to 79 (KFRDPQQELDNHQ) the composition is skewed to basic and acidic residues. The span at 80 to 89 (PNKRGGRRNR) shows a compositional bias: basic residues. A compositionally biased stretch (gly residues) spans 90 to 101 (GGGGGGGGWGGR). Over residues 199-208 (IKKEKEMEHK) the composition is skewed to basic and acidic residues. Positions 268–289 (VASTPKPKAVKPVSSSDSSTSD) are enriched in low complexity. 2 positions are modified to phosphoserine: Ser-288 and Ser-290. 2 positions are modified to phosphothreonine: Thr-292 and Thr-327. The span at 327–336 (TDEEESTEPE) shows a compositional bias: acidic residues. Ser-332 bears the Phosphoserine mark. A Phosphothreonine modification is found at Thr-333. 2 CCHC-type zinc fingers span residues 354–367 (CGICDKKGHTSFQC) and 371–386 (CRNCSGSYHGLKNCPN). Residues 421-513 (VTAPVSAKPK…AASLPPQVFP (93 aa)) form a disordered region. Over residues 428–447 (KPKKDKKASIKKIKKSSQKR) the composition is skewed to basic residues. Over residues 456-480 (DEEDDEEDDDEDEDDSSESDDSESS) the composition is skewed to acidic residues.

May be phosphorylated in vivo by CkIIalpha. mbm and CkIIalpha colocalize to the nucleolus and mbm is phosphorylated in vitro by CkIIalpha. As to expression, shows widespread expression in third instar larval brain with no apparent difference between males and females (at protein level). Detected at low levels in the mushroom body neuropil and is also expressed in many cells of the brain outside the mushroom body (at protein level). Not detected in third instar larval brain cells in anaphase (at protein level).

It localises to the nucleus. The protein localises to the nucleolus. It is found in the cytoplasm. Functionally, required for small ribosomal subunit biogenesis in neuroblasts. Plays a role in mushroom body development. In Drosophila melanogaster (Fruit fly), this protein is Protein mushroom body miniature.